A 260-amino-acid polypeptide reads, in one-letter code: Triosephosphate isomerase (260 aa).

11-13 (NWK) contributes to the substrate binding site. His-103 (electrophile) is an active-site residue. The active-site Proton acceptor is the Glu-175. Substrate is bound by residues Gly-181, Ser-220, and 241–242 (GG).

It belongs to the triosephosphate isomerase family. In terms of assembly, homodimer.

It is found in the cytoplasm. It carries out the reaction D-glyceraldehyde 3-phosphate = dihydroxyacetone phosphate. Its pathway is carbohydrate biosynthesis; gluconeogenesis. It functions in the pathway carbohydrate degradation; glycolysis; D-glyceraldehyde 3-phosphate from glycerone phosphate: step 1/1. In terms of biological role, involved in the gluconeogenesis. Catalyzes stereospecifically the conversion of dihydroxyacetone phosphate (DHAP) to D-glyceraldehyde-3-phosphate (G3P). This chain is Triosephosphate isomerase, found in Shewanella amazonensis (strain ATCC BAA-1098 / SB2B).